Reading from the N-terminus, the 175-residue chain is Ribosome maturation factor RimM (175 aa).

Residues 99-171 (AGEYYWFQLK…RILFDLPDGL (73 aa)) form the PRC barrel domain.

It belongs to the RimM family. In terms of assembly, binds ribosomal protein uS19.

It is found in the cytoplasm. Functionally, an accessory protein needed during the final step in the assembly of 30S ribosomal subunit, possibly for assembly of the head region. Essential for efficient processing of 16S rRNA. May be needed both before and after RbfA during the maturation of 16S rRNA. It has affinity for free ribosomal 30S subunits but not for 70S ribosomes. The polypeptide is Ribosome maturation factor RimM (Syntrophotalea carbinolica (strain DSM 2380 / NBRC 103641 / GraBd1) (Pelobacter carbinolicus)).